Here is a 137-residue protein sequence, read N- to C-terminus: MAVTYQTEGVKMPDIKKRETTEWIKNVAASYGKRLGEIAYIFCSDEKILEVNRQYLQHDYYTDIITFDYCQGDRLSGDLFISLDTIRTNAEQFGAAYDDELHRVIIHGILHLCGINDKGPGEREIMEEAENKALAMR.

Positions 107, 111, and 117 each coordinate Zn(2+).

The protein belongs to the endoribonuclease YbeY family. Zn(2+) serves as cofactor.

Its subcellular location is the cytoplasm. Single strand-specific metallo-endoribonuclease involved in late-stage 70S ribosome quality control and in maturation of the 3' terminus of the 16S rRNA. This is Endoribonuclease YbeY from Bacteroides thetaiotaomicron (strain ATCC 29148 / DSM 2079 / JCM 5827 / CCUG 10774 / NCTC 10582 / VPI-5482 / E50).